Reading from the N-terminus, the 198-residue chain is uncharacterized protein (198 aa).

Disordered stretches follow at residues 15-69 (RLGQ…KDTR) and 172-198 (FSVK…LWGL). Basic and acidic residues-rich tracts occupy residues 37 to 49 (HKSF…DQSR) and 56 to 69 (FNEK…KDTR). The segment covering 176-186 (ESSNLSNNDSD) has biased composition (low complexity). Acidic residues predominate over residues 187–198 (ASLDEDTLLWGL).

Its subcellular location is the nucleus. This is an uncharacterized protein from Schizosaccharomyces pombe (strain 972 / ATCC 24843) (Fission yeast).